Consider the following 248-residue polypeptide: Triosephosphate isomerase (248 aa).

The substrate site is built by asparagine 12 and lysine 14. Lysine 14 is subject to N6-acetyllysine. Tyrosine 68 is subject to 3'-nitrotyrosine. Histidine 96 acts as the Electrophile in catalysis. Serine 106 is subject to Phosphoserine. Lysine 142 is covalently cross-linked (Glycyl lysine isopeptide (Lys-Gly) (interchain with G-Cter in SUMO1)). N6-succinyllysine is present on lysine 149. The residue at position 156 (lysine 156) is an N6-acetyllysine; alternate. Lysine 156 carries the N6-succinyllysine; alternate modification. The active-site Proton acceptor is the glutamate 166. Phosphothreonine is present on threonine 173. Position 194 is an N6-acetyllysine; alternate (lysine 194). Lysine 194 carries the N6-succinyllysine; alternate modification. Lysine 194 is subject to N6-methyllysine; alternate. A 3'-nitrotyrosine modification is found at tyrosine 209. Serine 212 carries the post-translational modification Phosphoserine. Threonine 214 is subject to Phosphothreonine. Serine 223 bears the Phosphoserine mark. The residue at position 238 (lysine 238) is an N6-acetyllysine.

Belongs to the triosephosphate isomerase family. Homodimer.

It localises to the cytoplasm. It catalyses the reaction dihydroxyacetone phosphate = methylglyoxal + phosphate. The enzyme catalyses D-glyceraldehyde 3-phosphate = dihydroxyacetone phosphate. It participates in carbohydrate degradation; glycolysis; D-glyceraldehyde 3-phosphate from glycerone phosphate: step 1/1. It functions in the pathway carbohydrate biosynthesis; gluconeogenesis. Its function is as follows. Triosephosphate isomerase is an extremely efficient metabolic enzyme that catalyzes the interconversion between dihydroxyacetone phosphate (DHAP) and D-glyceraldehyde-3-phosphate (G3P) in glycolysis and gluconeogenesis. In terms of biological role, it is also responsible for the non-negligible production of methylglyoxal a reactive cytotoxic side-product that modifies and can alter proteins, DNA and lipids. This chain is Triosephosphate isomerase (TPI1), found in Sus scrofa (Pig).